Reading from the N-terminus, the 248-residue chain is Segregation and condensation protein A (248 aa).

It belongs to the ScpA family. Component of a cohesin-like complex composed of ScpA, ScpB and the Smc homodimer, in which ScpA and ScpB bind to the head domain of Smc. The presence of the three proteins is required for the association of the complex with DNA.

The protein resides in the cytoplasm. Functionally, participates in chromosomal partition during cell division. May act via the formation of a condensin-like complex containing Smc and ScpB that pull DNA away from mid-cell into both cell halves. This is Segregation and condensation protein A from Clostridium perfringens (strain ATCC 13124 / DSM 756 / JCM 1290 / NCIMB 6125 / NCTC 8237 / Type A).